The sequence spans 1013 residues: Receptor-type tyrosine-protein phosphatase N2 (1013 aa).

Residues 1–19 (MALPLLLLLLLLLPPRVLP) form the signal peptide. Residues 1–419 (MALPLLLLLL…PGALPFAKPL (419 aa)) form an involved in localization to secretory granules; interaction with CPE region. Residues 20 to 613 (AAPSSVPHGR…QAEQEDSTKF (594 aa)) lie on the Extracellular side of the membrane. 4 disordered regions span residues 116–137 (RHPE…ERRY), 273–302 (MPRP…TGEG), 342–382 (DHRG…VQDD), and 401–487 (LQDH…SLPA). A compositionally biased stretch (basic and acidic residues) spans 419–430 (LKMERKKSERPE). Phosphoserine occurs at positions 434 and 435. The N-linked (GlcNAc...) asparagine glycan is linked to N562. A helical transmembrane segment spans residues 614-634 (IALTLVSLACILGVLLASGLI). Over 635–1013 (YCLRHSSQHR…VNAILKALPQ (379 aa)) the chain is Cytoplasmic. Positions 664 to 673 (YQELCRQRMA) match the Tyrosine-based internalization motif motif. A disordered region spans residues 673-717 (ATRPPDRPEGPHTSRISSVSSQFSDGPMPSPSARSSASSWSEEPV). The segment covering 686–696 (SRISSVSSQFS) has biased composition (polar residues). Phosphoserine occurs at positions 690 and 696. Residues 703–717 (PSARSSASSWSEEPV) are compositionally biased toward low complexity. In terms of domain architecture, Tyrosine-protein phosphatase spans 743–1003 (LEKEWEALCA…EFALTAVAEE (261 aa)). Substrate contacts are provided by residues D911 and 943–949 (CSDGAGR). The active-site Phosphocysteine intermediate is C943. At K968 the chain carries N6-acetyllysine. Residue Q988 coordinates substrate. Residues 1002–1008 (EEVNAIL) carry the Leucine-based sorting signal motif.

It belongs to the protein-tyrosine phosphatase family. Receptor class 8 subfamily. Self-associates. Interacts (via cytoplasmic domain) with PTPRN (via cytoplasmic domain). Interacts (precursor form) with CPE. Interacts with HAP1. Interacts with AP2A1 or AP2A2 and AP1G1; indicative for an association with adaptor protein complex 2 (AP-2) and adaptor protein complex 1 (AP-1). Interacts with AP2M1; indicative for an association with adaptor protein complex 2 (AP-2). Interacts with MYO5A. In terms of processing, subject to proteolytic cleavage at multiple sites. Detected in pancreatic islets and adrenal medulla.

It is found in the cytoplasmic vesicle. The protein resides in the secretory vesicle membrane. Its subcellular location is the secretory vesicle. It localises to the synaptic vesicle membrane. It catalyses the reaction O-phospho-L-tyrosyl-[protein] + H2O = L-tyrosyl-[protein] + phosphate. Plays a role in vesicle-mediated secretory processes. Required for normal accumulation of secretory vesicles in hippocampus, pituitary and pancreatic islets. Required for the accumulation of normal levels of insulin-containing vesicles and preventing their degradation. Plays a role in insulin secretion in response to glucose stimuli. Required for normal accumulation of the neurotransmitters norepinephrine, dopamine and serotonin in the brain. In females, but not in males, required for normal accumulation and secretion of pituitary hormones, such as luteinizing hormone (LH) and follicle-stimulating hormone (FSH). Required to maintain normal levels of renin expression and renin release. May regulate catalytic active protein-tyrosine phosphatases such as PTPRA through dimerization. Has phosphatidylinositol phosphatase activity; the PIPase activity is involved in its ability to regulate insulin secretion. Can dephosphorylate phosphatidylinositol 4,5-biphosphate, phosphatidylinositol 5-phosphate and phosphatidylinositol 3-phosphate. Regulates PI(4,5)P2 level in the plasma membrane and localization of cofilin at the plasma membrane and thus is indirectly involved in regulation of actin dynamics related to cell migration and metastasis; upon hydrolysis of PI(4,5)P2 cofilin is released from the plasma membrane and acts in the cytoplasm in severing F-actin filaments. The polypeptide is Receptor-type tyrosine-protein phosphatase N2 (PTPRN2) (Macaca nemestrina (Pig-tailed macaque)).